The chain runs to 102 residues: NADH-quinone oxidoreductase subunit K (102 aa).

Helical transmembrane passes span 5–25 (ITHY…GIFL), 31–51 (IIIL…FVAF), and 66–86 (FILT…VVFF).

The protein belongs to the complex I subunit 4L family. In terms of assembly, NDH-1 is composed of 14 different subunits. Subunits NuoA, H, J, K, L, M, N constitute the membrane sector of the complex.

The protein localises to the cell inner membrane. The enzyme catalyses a quinone + NADH + 5 H(+)(in) = a quinol + NAD(+) + 4 H(+)(out). In terms of biological role, NDH-1 shuttles electrons from NADH, via FMN and iron-sulfur (Fe-S) centers, to quinones in the respiratory chain. The immediate electron acceptor for the enzyme in this species is believed to be ubiquinone. Couples the redox reaction to proton translocation (for every two electrons transferred, four hydrogen ions are translocated across the cytoplasmic membrane), and thus conserves the redox energy in a proton gradient. The chain is NADH-quinone oxidoreductase subunit K from Bartonella quintana (strain Toulouse) (Rochalimaea quintana).